We begin with the raw amino-acid sequence, 303 residues long: UDP-3-O-acyl-N-acetylglucosamine deacetylase (303 aa).

Zn(2+) is bound by residues H78, H237, and D241. H264 acts as the Proton donor in catalysis.

It belongs to the LpxC family. It depends on Zn(2+) as a cofactor.

It catalyses the reaction a UDP-3-O-[(3R)-3-hydroxyacyl]-N-acetyl-alpha-D-glucosamine + H2O = a UDP-3-O-[(3R)-3-hydroxyacyl]-alpha-D-glucosamine + acetate. The protein operates within glycolipid biosynthesis; lipid IV(A) biosynthesis; lipid IV(A) from (3R)-3-hydroxytetradecanoyl-[acyl-carrier-protein] and UDP-N-acetyl-alpha-D-glucosamine: step 2/6. Functionally, catalyzes the hydrolysis of UDP-3-O-myristoyl-N-acetylglucosamine to form UDP-3-O-myristoylglucosamine and acetate, the committed step in lipid A biosynthesis. The chain is UDP-3-O-acyl-N-acetylglucosamine deacetylase from Pseudomonas paraeruginosa (strain DSM 24068 / PA7) (Pseudomonas aeruginosa (strain PA7)).